The following is a 146-amino-acid chain: UPF0735 ACT domain-containing protein CHY_1913 (146 aa).

Positions 70–145 (TLALNLEHRA…GVSKVELVGQ (76 aa)) constitute an ACT domain.

Belongs to the UPF0735 family.

This is UPF0735 ACT domain-containing protein CHY_1913 from Carboxydothermus hydrogenoformans (strain ATCC BAA-161 / DSM 6008 / Z-2901).